Here is a 488-residue protein sequence, read N- to C-terminus: Probable Xaa-Pro aminopeptidase ATEG_00858 (488 aa).

The Mn(2+) site is built by Asp-273, Asp-284, Glu-417, and Glu-456.

This sequence belongs to the peptidase M24B family. Mn(2+) serves as cofactor.

It catalyses the reaction Release of any N-terminal amino acid, including proline, that is linked to proline, even from a dipeptide or tripeptide.. In terms of biological role, catalyzes the removal of a penultimate prolyl residue from the N-termini of peptides. The chain is Probable Xaa-Pro aminopeptidase ATEG_00858 from Aspergillus terreus (strain NIH 2624 / FGSC A1156).